The chain runs to 208 residues: Ras-related protein Rab-6B (208 aa).

Residues 20-27, threonine 45, 68-72, and 126-129 each bind GTP; these read GEQSVGKT, DTAGQ, and NKTD. The Effector region motif lies at 42–50; that stretch reads YQATIGIDF. 2 S-geranylgeranyl cysteine lipidation sites follow: cysteine 206 and cysteine 208. Cysteine 208 bears the Cysteine methyl ester mark.

The protein belongs to the small GTPase superfamily. Rab family. In terms of assembly, interacts (GTP-bound) with BICD1 (via C-terminus); the interaction is direct. Interacts (GDP-bound) with DYNLRB1. Interacts (GTP-bound) with APBA1/MINT1. Interacts (GTP-bound) with VPS13B.

It is found in the golgi apparatus membrane. Its subcellular location is the endoplasmic reticulum-Golgi intermediate compartment. The protein localises to the cytoplasmic vesicle. It catalyses the reaction GTP + H2O = GDP + phosphate + H(+). Regulated by guanine nucleotide exchange factors (GEFs) which promote the exchange of bound GDP for free GTP, GTPase activating proteins (GAPs) which increase the GTP hydrolysis activity, and GDP dissociation inhibitors which inhibit the dissociation of the nucleotide from the GTPase. The small GTPases Rab are key regulators of intracellular membrane trafficking, from the formation of transport vesicles to their fusion with membranes. Rabs cycle between active GTP-bound and inactive GDP-bound states. In their active state, drive transport of vesicular carriers from donor organelles to acceptor organelles to regulate the membrane traffic that maintains organelle identity and morphology. Recruits VPS13B to the Golgi membrane. Regulates the compacted morphology of the Golgi. Seems to have a role in retrograde membrane traffic at the level of the Golgi complex. May function in retrograde transport in neuronal cells. Plays a role in neuron projection development. The protein is Ras-related protein Rab-6B (RAB6B) of Bos taurus (Bovine).